The primary structure comprises 976 residues: Poly(ADP-ribose) glycohydrolase (976 aa).

M1 bears the N-acetylmethionine mark. Residues 1–69 (MNAGPGCEPC…GRAGQHRGSA (69 aa)) form a disordered region. The interval 1-456 (MNAGPGCEPC…LSPDKKWLGT (456 aa)) is A-domain. A Nuclear localization signal motif is present at residues 10–16 (CTKRPRW). S22 is modified (phosphoserine). The segment covering 37–46 (RVLDPKDAHV) has biased composition (basic and acidic residues). S68 carries the post-translational modification Phosphoserine. The PIP-box (PCNA interacting peptide) signature appears at 76 to 83 (QKTITSWM). 2 positions are modified to phosphoserine: S133 and S137. Residue T139 is modified to Phosphothreonine. Positions 183–350 (SNANIDRSPQ…PSRFQARDAD (168 aa)) are disordered. Composition is skewed to basic and acidic residues over residues 191–206 (PQND…ENRD) and 222–233 (TTEDEQAREAKS). Phosphoserine is present on S197. A Phosphothreonine modification is found at T199. 7 positions are modified to phosphoserine: S261, S264, S286, S291, S298, S302, and S316. Positions 316–331 (SEADEETSPGFDEQED) are enriched in acidic residues. Residues 332 to 342 (GSSSQTANKPS) are compositionally biased toward polar residues. An N6-acetyllysine modification is found at K340. S448 carries the post-translational modification Phosphoserine. The tract at residues 610–795 (QPIPLLKQKM…TEQYSEYTGY (186 aa)) is catalytic. 726-727 (IE) is a binding site for substrate. Residue D737 is part of the active site. Substrate contacts are provided by N740 and Q754. Catalysis depends on residues E755 and E756. Substrate is bound by residues Y795 and 869 to 874 (NWGCGA).

This sequence belongs to the poly(ADP-ribose) glycohydrolase family. In terms of assembly, interacts with PCNA. Interacts with NUDT5. In terms of tissue distribution, ubiquitously expressed.

Its subcellular location is the nucleus. The protein localises to the cytoplasm. The protein resides in the mitochondrion. It is found in the mitochondrion matrix. It carries out the reaction [(1''-&gt;2')-ADP-alpha-D-ribose](n) + H2O = [(1''-&gt;2')-ADP-alpha-D-ribose](n-1) + ADP-D-ribose. Poly(ADP-ribose) glycohydrolase that degrades poly(ADP-ribose) by hydrolyzing the ribose-ribose bonds present in poly(ADP-ribose). PARG acts both as an endo- and exoglycosidase, releasing poly(ADP-ribose) of different length as well as ADP-ribose monomers. It is however unable to cleave the ester bond between the terminal ADP-ribose and ADP-ribosylated residues, leaving proteins that are mono-ADP-ribosylated. Poly(ADP-ribose) is synthesized after DNA damage is only present transiently and is rapidly degraded by PARG. Required to prevent detrimental accumulation of poly(ADP-ribose) upon prolonged replicative stress, while it is not required for recovery from transient replicative stress. Responsible for the prevalence of mono-ADP-ribosylated proteins in cells, thanks to its ability to degrade poly(ADP-ribose) without cleaving the terminal protein-ribose bond. Required for retinoid acid-dependent gene transactivation, probably by removing poly(ADP-ribose) from histone demethylase KDM4D, allowing chromatin derepression at RAR-dependent gene promoters. Involved in the synthesis of ATP in the nucleus, together with PARP1, NMNAT1 and NUDT5. Nuclear ATP generation is required for extensive chromatin remodeling events that are energy-consuming. The protein is Poly(ADP-ribose) glycohydrolase of Homo sapiens (Human).